Here is a 1502-residue protein sequence, read N- to C-terminus: Ras guanine nucleotide exchange factor P (1502 aa).

The Calponin-homology (CH) domain maps to F84–E187. Disordered regions lie at residues A216–E242, Q325–N436, E456–G534, and T589–N935. Composition is skewed to low complexity over residues S218 to E242, Q325 to T345, T371 to H400, and S407 to T421. Positions Q287–Q328 form a coiled coil. The segment covering P422 to N436 has biased composition (polar residues). The stretch at E451–K515 forms a coiled coil. A compositionally biased stretch (low complexity) spans N458–N508. A compositionally biased stretch (pro residues) spans H518–P528. Composition is skewed to low complexity over residues T589 to N646, T663 to I675, S686 to P719, N764 to S790, and N813 to N853. A compositionally biased stretch (polar residues) spans L861–N876. Low complexity predominate over residues T883–N935. Residues V1032 to Q1076 adopt a coiled-coil conformation. The N-terminal Ras-GEF domain occupies G1102 to P1249. A Ras-GEF domain is found at D1267–R1498.

Promotes the exchange of Ras-bound GDP by GTP. In Dictyostelium discoideum (Social amoeba), this protein is Ras guanine nucleotide exchange factor P (gefP).